The primary structure comprises 309 residues: Homoserine kinase (309 aa).

Position 95–105 (95–105) interacts with ATP; it reads PHGRGLGSSSA.

It belongs to the GHMP kinase family. Homoserine kinase subfamily.

Its subcellular location is the cytoplasm. The catalysed reaction is L-homoserine + ATP = O-phospho-L-homoserine + ADP + H(+). The protein operates within amino-acid biosynthesis; L-threonine biosynthesis; L-threonine from L-aspartate: step 4/5. Catalyzes the ATP-dependent phosphorylation of L-homoserine to L-homoserine phosphate. The protein is Homoserine kinase of Streptomyces coelicolor (strain ATCC BAA-471 / A3(2) / M145).